The sequence spans 396 residues: Elongation factor Tu (396 aa).

A tr-type G domain is found at 10 to 206 (KPHVNVGTIG…ALDTYIPTPE (197 aa)). The tract at residues 19-26 (GHVDHGKT) is G1. 19–26 (GHVDHGKT) is a binding site for GTP. Threonine 26 serves as a coordination point for Mg(2+). The segment at 60-64 (GITIN) is G2. Residues 81–84 (DCPG) are G3. Residues 81–85 (DCPGH) and 136–139 (NKCD) contribute to the GTP site. Residues 136-139 (NKCD) are G4. Residues 174–176 (SAK) are G5.

The protein belongs to the TRAFAC class translation factor GTPase superfamily. Classic translation factor GTPase family. EF-Tu/EF-1A subfamily. As to quaternary structure, monomer.

The protein resides in the cytoplasm. The enzyme catalyses GTP + H2O = GDP + phosphate + H(+). Functionally, GTP hydrolase that promotes the GTP-dependent binding of aminoacyl-tRNA to the A-site of ribosomes during protein biosynthesis. The chain is Elongation factor Tu from Burkholderia vietnamiensis (strain G4 / LMG 22486) (Burkholderia cepacia (strain R1808)).